The chain runs to 249 residues: Ribosomal RNA small subunit methyltransferase J (249 aa).

S-adenosyl-L-methionine is bound by residues 101–102 (RD), 117–118 (ER), 153–154 (SS), and Asp-171.

Belongs to the methyltransferase superfamily. RsmJ family.

The protein resides in the cytoplasm. The enzyme catalyses guanosine(1516) in 16S rRNA + S-adenosyl-L-methionine = N(2)-methylguanosine(1516) in 16S rRNA + S-adenosyl-L-homocysteine + H(+). Its function is as follows. Specifically methylates the guanosine in position 1516 of 16S rRNA. The sequence is that of Ribosomal RNA small subunit methyltransferase J from Salmonella arizonae (strain ATCC BAA-731 / CDC346-86 / RSK2980).